Here is a 184-residue protein sequence, read N- to C-terminus: Tumor necrosis factor alpha-induced protein 8-like protein 2 (184 aa).

Belongs to the TNFAIP8 family. TNFAIP8L2 subfamily. May interact with CASP8; however, such result is unclear since could not reproduce the interaction with CASP8. Interacts with RAC1. Ubiquitinated in a BTRC-depdent manner; leading to degradation mediated through the proteasome pathway.

Its subcellular location is the cytoplasm. The protein localises to the nucleus. It is found in the lysosome. In terms of biological role, acts as a negative regulator of innate and adaptive immunity by maintaining immune homeostasis. Plays a regulatory role in the Toll-like signaling pathway by determining the strength of LPS-induced signaling and gene expression. Inhibits TCR-mediated T-cell activation and negatively regulate T-cell function to prevent hyperresponsiveness. Also inhibits autolysosome formation via negatively modulating MTOR activation by interacting with RAC1 and promoting the disassociation of the RAC1-MTOR complex. Plays an essential role in NK-cell biology by acting as a checkpoint and displaying an expression pattern correlating with NK-cell maturation process and by negatively regulating NK-cell maturation and antitumor immunity. Mechanistically, suppresses IL-15-triggered mTOR activity in NK-cells. The chain is Tumor necrosis factor alpha-induced protein 8-like protein 2 (TNFAIP8L2) from Rhinolophus ferrumequinum (Greater horseshoe bat).